Consider the following 1372-residue polypeptide: Putative Polyprotein CP (1372 aa).

2 coiled-coil regions span residues 126–153 (NKEN…LKNI) and 299–350 (EKQK…EELD). The interval 372 to 398 (SESSEINEISDNETEQISGSDSDYNNE) is disordered. Over residues 386–398 (EQISGSDSDYNNE) the composition is skewed to polar residues. A CCHC-type zinc finger spans residues 739-756 (CKCYNCGEEGHISPNCKK). Residues 1162–1189 (DDRTNIQREKDQIEKADHNLELQKELNN) adopt a coiled-coil conformation.

It localises to the virion. This is Putative Polyprotein CP from Cassava vein mosaic virus (CsVMV).